Consider the following 222-residue polypeptide: uncharacterized protein (222 aa).

2 consecutive transmembrane segments (helical) span residues I22–I42 and A189–V209.

The protein localises to the cell membrane. This is an uncharacterized protein from Escherichia coli (strain K12).